A 378-amino-acid chain; its full sequence is Plant intracellular Ras-group-related LRR protein 8 (378 aa).

Positions 10 to 86 (PTITVQVKFG…VMLMASQGLH (77 aa)) constitute a Ubiquitin-like domain. A disordered region spans residues 85–120 (LHQGDGPITKNSSVPAPSTRRASNVKEAQIQKSDTN). The segment covering 93-106 (TKNSSVPAPSTRRA) has biased composition (polar residues). LRR repeat units follow at residues 129 to 152 (WKAT…VWGC), 153 to 176 (GSSI…IAAL), 178 to 201 (SLQK…GLTC), 202 to 225 (VQTL…LGSI), 226 to 250 (THLR…LLKH), 252 to 271 (EILI…IGGC), 272 to 293 (ESLN…AFGN), 294 to 317 (LQHL…FFIK), and 319 to 344 (SQLI…GWEE).

This sequence belongs to the SHOC2 family. In terms of tissue distribution, widely expressed except in panicles.

Its function is as follows. Leucine-rich repeat protein that likely mediates protein interactions, possibly in the context of signal transduction. The protein is Plant intracellular Ras-group-related LRR protein 8 (IRL8) of Oryza sativa subsp. japonica (Rice).